Reading from the N-terminus, the 1269-residue chain is MTVKLGDGGSGEDGLKKLGKRAADEESLEGEGAGGADAAEESSGTKRDEKTPRAGADGPPAPPGAPQAPSPPQGSPQDQHHFLRSSVRPQSKRPRKDPPSAVGSGNAGGSGPRGKGAEGGGSSSGNVSGVAPAAPAGGSRSSSRNLGSSGGEKEEGKKVRRQWESWSTEDKNTFFEGLYEHGKDFEAIQNNIALKYKKKGKPASMVKNKEQVRHFYYRTWHKITKYIDFDHVFSRGLKKSSQELYGLICYGELRKKIGGCMDDKNATKLNELIQVGATTVRYKGRNLRIKAPMCRALKKLCDPDGLSDEEDQKPVRLPLKVPIELQPRNNHAWARVQSLAQNPRLRMIVELHRKVSSLIEFLKQKWALHEVRVRKTLEERQLQDSCSAPMQEKVTLHLFPGENCTLTPLPGVARVVHSKAFCTVHWQEGGRCKQSAKDAHVLPPAQILGIQSGQGTARGQVKCPRSGAEGKGVGRPPPAADALQSSGESSPESAPGEGAALSLSSPDAPDRPPPRHQDTGPCLEKTPAEGRDSPTREPGALPCACGQLPDLEDELSLLDPLPRYLKSCQDLIVPEQCRCADTRPGSEQPPLGGAASPEVLAPVSKEAADLAPTGPSPRPGPGLLLDVCTKDLADAPAEELQEKGSPAGPPPSQGQPAARPPKEVPASRLAQQLREEGWNLQTSESLTLAEVYLMMGKPSKLQLEYDWLGPGRQDPRPGSLPTALHKQRLLSCLLKLISTEVNPKLALEANTISTASVRPAQEEQSMTPPGKVVTVSSRSPRCPRNQASLRSSKTFPPSSAPCSSGLRNPPRPLLVPGPSSTGSNDSDGGLFAVPTTLPPNSRHGKLFSPSKEAELTFRQHLNSISMQSDFFLPKPRKLRNRHLRKPLVVQRTLLPRPSENQSHNVCSFSILSNSSVTGRGSFRPIQSSLTKAALSRPIVPKVLPPQATSHLASAIDLAATSAGILSGNPLPALDTEGLSGISPLSSDEVTGAISGQDSTGTHQDGDTLPTVGGSDPFVSIPSRPEQEPVADSFQGSSVLSLSELPKAPLQNGLSIPLSSSESSSTRLSPPDVSALLDISLPGPPEDALSQGEPATHISDSIIEIAISSGQYGEGVPLSPAKLNGSDSSKSLPSPSSSPQPHWIASPTHDPQWYPSDSTDSSLSSLFASFISPEKSRKMLPTPIGTNSGTSLLGPSLLDGNSRDSFVSRSLADVAEVVDSQLVCMMNENSIDYISRFNDLAQELSIAEPGRREALFDGGGGGPAVSDLSQ.

Gly residues predominate over residues 1-12; it reads MTVKLGDGGSGE. A disordered region spans residues 1–165; sequence MTVKLGDGGS…GKKVRRQWES (165 aa). 2 stretches are compositionally biased toward basic and acidic residues: residues 13–24 and 43–52; these read DGLKKLGKRAAD and SGTKRDEKTP. Over residues 59-74 the composition is skewed to pro residues; it reads PPAPPGAPQAPSPPQG. The span at 105 to 123 shows a compositional bias: gly residues; sequence GNAGGSGPRGKGAEGGGSS. The segment covering 124 to 147 has biased composition (low complexity); that stretch reads SGNVSGVAPAAPAGGSRSSSRNLG. Residues 151-165 show a composition bias toward basic and acidic residues; it reads GEKEEGKKVRRQWES. The 64-residue stretch at 161 to 224 folds into the SANT domain; sequence RQWESWSTED…FYYRTWHKIT (64 aa). Phosphoserine is present on serine 307. 6 disordered regions span residues 450–541, 581–666, 757–827, 976–1034, 1055–1092, and 1115–1157; these read IQSG…PGAL, DTRP…EVPA, VRPA…NDSD, EGLS…DSFQ, IPLS…SQGE, and VPLS…PSDS. A compositionally biased stretch (low complexity) spans 485 to 507; the sequence is SSGESSPESAPGEGAALSLSSPD. 2 stretches are compositionally biased toward basic and acidic residues: residues 508–518 and 526–535; these read APDRPPPRHQD and TPAEGRDSPT. 3 stretches are compositionally biased toward polar residues: residues 757 to 767, 774 to 806, and 982 to 1002; these read VRPAQEEQSMT, TVSS…SSGL, and SPLS…TGTH. Composition is skewed to low complexity over residues 1055-1070 and 1125-1140; these read IPLS…LSPP and SDSS…SPQP. The residue at position 1268 (serine 1268) is a Phosphoserine.

It belongs to the cramped family.

It is found in the nucleus. This chain is Protein cramped-like, found in Homo sapiens (Human).